The sequence spans 105 residues: Phosphoribosyl-AMP cyclohydrolase (105 aa).

Aspartate 72 serves as a coordination point for Mg(2+). Zn(2+) is bound at residue cysteine 73. 2 residues coordinate Mg(2+): aspartate 74 and aspartate 76. Positions 89 and 96 each coordinate Zn(2+).

Belongs to the PRA-CH family. In terms of assembly, homodimer. Mg(2+) is required as a cofactor. Zn(2+) serves as cofactor.

The protein resides in the cytoplasm. It catalyses the reaction 1-(5-phospho-beta-D-ribosyl)-5'-AMP + H2O = 1-(5-phospho-beta-D-ribosyl)-5-[(5-phospho-beta-D-ribosylamino)methylideneamino]imidazole-4-carboxamide. It functions in the pathway amino-acid biosynthesis; L-histidine biosynthesis; L-histidine from 5-phospho-alpha-D-ribose 1-diphosphate: step 3/9. Its function is as follows. Catalyzes the hydrolysis of the adenine ring of phosphoribosyl-AMP. This is Phosphoribosyl-AMP cyclohydrolase from Listeria monocytogenes serovar 1/2a (strain ATCC BAA-679 / EGD-e).